A 384-amino-acid chain; its full sequence is MPNASRVVIVAGEESGDHHAAELVKQLKAVYPDLEISGIGGKHLRAAGVHLISDLTRYAVTGLTEIIPFLKIFRKAFQDIKQHLSTQKPDLLILVDYPAFNLRLAKYAKKKLGLKIIYYISPQIWAWKGKRIHLIKDCIDKMAVIFPFEKTIYENAGVPVSFVGHPLVKKIAAAKDKHSSRTSLGLPLNEPIIALLPGSRHSEIERHIPILVNTAKLLTLDSPKLRFVVPIAGTINPDKVKAYFSNQNLTVTFIQGQAIECMSAADFVIVASGTASLECALLEKPMCIIYKSSFLTYVAAMYFIKVKFLGLCNLLANKMMVPEFLQYDCNAIELSRYISNFHNNPNQPESMINQLAKLKESLSSSQADCSLFDLVVAELPEKNA.

This sequence belongs to the LpxB family.

It carries out the reaction a lipid X + a UDP-2-N,3-O-bis[(3R)-3-hydroxyacyl]-alpha-D-glucosamine = a lipid A disaccharide + UDP + H(+). The protein operates within bacterial outer membrane biogenesis; LPS lipid A biosynthesis. Its function is as follows. Condensation of UDP-2,3-diacylglucosamine and 2,3-diacylglucosamine-1-phosphate to form lipid A disaccharide, a precursor of lipid A, a phosphorylated glycolipid that anchors the lipopolysaccharide to the outer membrane of the cell. In Legionella pneumophila (strain Lens), this protein is Lipid-A-disaccharide synthase 1.